A 331-amino-acid chain; its full sequence is tRNA-cytidine(32) 2-sulfurtransferase (331 aa).

Residues 73-78 carry the PP-loop motif motif; it reads SGGKDS. Residues C148, C151, and C239 each coordinate [4Fe-4S] cluster.

The protein belongs to the TtcA family. In terms of assembly, homodimer. Mg(2+) is required as a cofactor. [4Fe-4S] cluster serves as cofactor.

Its subcellular location is the cytoplasm. It carries out the reaction cytidine(32) in tRNA + S-sulfanyl-L-cysteinyl-[cysteine desulfurase] + AH2 + ATP = 2-thiocytidine(32) in tRNA + L-cysteinyl-[cysteine desulfurase] + A + AMP + diphosphate + H(+). It functions in the pathway tRNA modification. In terms of biological role, catalyzes the ATP-dependent 2-thiolation of cytidine in position 32 of tRNA, to form 2-thiocytidine (s(2)C32). The sulfur atoms are provided by the cysteine/cysteine desulfurase (IscS) system. The sequence is that of tRNA-cytidine(32) 2-sulfurtransferase from Burkholderia mallei (strain NCTC 10247).